We begin with the raw amino-acid sequence, 936 residues long: Coiled-coil domain-containing protein 191 (936 aa).

2 coiled-coil regions span residues 189-270 (RLTM…VKAA) and 364-440 (RDYT…LQAA). Residues 495–541 (LGRTTTGNLQGSLQNVSLSAPGNKQHKTLGAEPSQQPGSNETLRTTS) form a disordered region. Composition is skewed to polar residues over residues 497–516 (RTTTGNLQGSLQNVSLSAPG) and 527–541 (PSQQPGSNETLRTTS). Positions 554-592 (NRHVFQQQLIEKQKKKLQEQQKTILELKKNLQLAEAQWA) form a coiled coil. 2 disordered regions span residues 607 to 656 (LSKP…TPHP) and 691 to 714 (KAQEEERQKREAEEKEAQLERKRE). The stretch at 662 to 739 (EERAIQRAEC…IKRNQQLEAI (78 aa)) forms a coiled coil.

The protein is Coiled-coil domain-containing protein 191 (CCDC191) of Homo sapiens (Human).